We begin with the raw amino-acid sequence, 207 residues long: Nudix hydrolase 4 (207 aa).

The Nudix hydrolase domain maps to 58-194 (GYRQVVGCVP…WMREALEAFI (137 aa)). The Nudix box signature appears at 101-122 (GGWETDESMEEAALRETIEEAG). Glutamate 116 and glutamate 120 together coordinate Mg(2+).

This sequence belongs to the Nudix hydrolase family. Mg(2+) serves as cofactor. Mn(2+) is required as a cofactor. As to expression, expressed in roots, stems and leaves.

The enzyme catalyses ADP-D-ribose + H2O = D-ribose 5-phosphate + AMP + 2 H(+). It carries out the reaction NAD(+) + H2O = beta-nicotinamide D-ribonucleotide + AMP + 2 H(+). The catalysed reaction is NADH + H2O = reduced beta-nicotinamide D-ribonucleotide + AMP + 2 H(+). Functionally, probably mediates the hydrolysis of some nucleoside diphosphate derivatives. In vitro, it can use both NADH and ADP-ribose as substrates; however the relevance of such substrates in vivo is unclear. The protein is Nudix hydrolase 4 (NUDT4) of Arabidopsis thaliana (Mouse-ear cress).